Reading from the N-terminus, the 248-residue chain is Mannosylfructose-phosphate phosphatase (248 aa).

It belongs to the sucrose phosphatase family.

It carries out the reaction beta-D-fructofuranosyl alpha-D-mannopyranoside 6(F)-phosphate + H2O = beta-D-fructofuranosyl alpha-D-mannopyranoside + phosphate. The protein operates within carbohydrate metabolism; mannosylfructose biosynthesis; beta-D-fructofuranosyl alpha-D-mannopyranoside from D-fructose 6-phosphate and GDP-alpha-D-mannose: step 2/2. Its activity is regulated as follows. Inhibited by the phosphatase inhibitors fluoride, molybdate and orthovanadate. The polypeptide is Mannosylfructose-phosphate phosphatase (Agrobacterium fabrum (strain C58 / ATCC 33970) (Agrobacterium tumefaciens (strain C58))).